The chain runs to 269 residues: MNLMNPEFAMPDVQSTVDTRQMPIQRVGVRAVRHPLTVRTAEGETQATVGTWNLDVHLPADQKGTHMSRFVALLEERGGPLTADAFRTMLATMLEKLEARAGRIEVSFPYFVNKTAPVSGVRSLLDYEVTLTGDVRDGLTRVFAKVLVPVTSLCPCSKKISQYGAHNQRSHVTIDAELAADVPVEDLIRIAEEEASCELWGLLKRPDEKFVTERAYENPKFVEDLVRDVARRLDADERIVAYVLEAENFESIHNHSAYALIERDKRRGA.

Belongs to the GTP cyclohydrolase IV family.

It carries out the reaction GTP + H2O = 7,8-dihydroneopterin 3'-triphosphate + formate + H(+). The protein operates within cofactor biosynthesis; 7,8-dihydroneopterin triphosphate biosynthesis; 7,8-dihydroneopterin triphosphate from GTP: step 1/1. In terms of biological role, converts GTP to 7,8-dihydroneopterin triphosphate. This is GTP cyclohydrolase FolE2 from Burkholderia mallei (strain NCTC 10229).